The following is a 535-amino-acid chain: CTP synthase (535 aa).

The tract at residues 1–266 (MKFVVITGGV…GDYICERLGL (266 aa)) is amidoligase domain. S12 provides a ligand contact to CTP. S12 lines the UTP pocket. ATP contacts are provided by residues 13-18 (GIGKGI) and D70. Residues D70 and E140 each contribute to the Mg(2+) site. CTP contacts are provided by residues 147–149 (DIE), 187–192 (KTKPTQ), and K223. UTP contacts are provided by residues 187–192 (KTKPTQ) and K223. Residues 291-535 (RIAVVGKYVD…IKAAAGQGPD (245 aa)) enclose the Glutamine amidotransferase type-1 domain. G355 lines the L-glutamine pocket. Catalysis depends on C382, which acts as the Nucleophile; for glutamine hydrolysis. L-glutamine-binding positions include 383 to 386 (LGFQ), E406, and R464. Active-site residues include H508 and E510.

The protein belongs to the CTP synthase family. As to quaternary structure, homotetramer.

The enzyme catalyses UTP + L-glutamine + ATP + H2O = CTP + L-glutamate + ADP + phosphate + 2 H(+). It catalyses the reaction L-glutamine + H2O = L-glutamate + NH4(+). The catalysed reaction is UTP + NH4(+) + ATP = CTP + ADP + phosphate + 2 H(+). Its pathway is pyrimidine metabolism; CTP biosynthesis via de novo pathway; CTP from UDP: step 2/2. With respect to regulation, allosterically activated by GTP, when glutamine is the substrate; GTP has no effect on the reaction when ammonia is the substrate. The allosteric effector GTP functions by stabilizing the protein conformation that binds the tetrahedral intermediate(s) formed during glutamine hydrolysis. Inhibited by the product CTP, via allosteric rather than competitive inhibition. Its function is as follows. Catalyzes the ATP-dependent amination of UTP to CTP with either L-glutamine or ammonia as the source of nitrogen. Regulates intracellular CTP levels through interactions with the four ribonucleotide triphosphates. The polypeptide is CTP synthase (Methanopyrus kandleri (strain AV19 / DSM 6324 / JCM 9639 / NBRC 100938)).